Consider the following 315-residue polypeptide: Prephenate dehydratase (315 aa).

A Prephenate dehydratase domain is found at 3–189 (RIAYLGPEGT…ARTRFLLIGV (187 aa)). An ACT domain is found at 203-280 (SAVLRIANVP…ADVRYLGSWP (78 aa)).

As to quaternary structure, homodimer.

The enzyme catalyses prephenate + H(+) = 3-phenylpyruvate + CO2 + H2O. Its pathway is amino-acid biosynthesis; L-phenylalanine biosynthesis; phenylpyruvate from prephenate: step 1/1. In Mycobacterium ulcerans (strain Agy99), this protein is Prephenate dehydratase (pheA).